Here is a 377-residue protein sequence, read N- to C-terminus: Flagellin C (377 aa).

2 coiled-coil regions span residues 103–129 (SNSKADRVAIQEEITALNDELNRVAET) and 301–340 (VDSHRAELGAFQNRFNHAINNLDNINENVNASKSRIKDTD).

It belongs to the bacterial flagellin family. As to quaternary structure, heteromer of multiple flagellin subunits including FlaA, FlaB, FlaC, FlaD and FlaE.

It localises to the secreted. The protein localises to the bacterial flagellum. Functionally, flagellin is the subunit protein which polymerizes to form the filaments of bacterial flagella. FlaC is not essential for flagellar synthesis and motility. This chain is Flagellin C (flaC), found in Vibrio cholerae serotype O1 (strain ATCC 39541 / Classical Ogawa 395 / O395).